Reading from the N-terminus, the 289-residue chain is 2-hydroxy-6-oxononadienedioate/2-hydroxy-6-oxononatrienedioate hydrolase 1 (289 aa).

The 237-residue stretch at 39-275 (TVVMLHGSGP…RCGHWAQWEH (237 aa)) folds into the AB hydrolase-1 domain. The active-site Proton acceptor is histidine 269.

This sequence belongs to the AB hydrolase superfamily. MhpC family. As to quaternary structure, homodimer.

It carries out the reaction (2Z,4E)-2-hydroxy-6-oxonona-2,4-dienedioate + H2O = (2Z)-2-hydroxypenta-2,4-dienoate + succinate + H(+). The enzyme catalyses (2Z,4E,7E)-2-hydroxy-6-oxonona-2,4,7-trienedioate + H2O = (2Z)-2-hydroxypenta-2,4-dienoate + fumarate + H(+). It functions in the pathway aromatic compound metabolism; 3-phenylpropanoate degradation. Its function is as follows. Catalyzes the cleavage of the C5-C6 bond of 2-hydroxy-6-oxononadienedioate and 2-hydroxy-6-oxononatrienedioate, a dienol ring fission product of the bacterial meta-cleavage pathway for degradation of phenylpropionic acid. In Dechloromonas aromatica (strain RCB), this protein is 2-hydroxy-6-oxononadienedioate/2-hydroxy-6-oxononatrienedioate hydrolase 1.